Reading from the N-terminus, the 1366-residue chain is DNA-directed RNA polymerase subunit beta' (1366 aa).

The span at Met1–Lys20 shows a compositional bias: basic residues. The tract at residues Met1–Thr33 is disordered. Positions 248, 315, 322, and 325 each coordinate Zn(2+). The interval Tyr1291 to Glu1366 is disordered. Residues Leu1354–Glu1366 show a composition bias toward low complexity.

This sequence belongs to the RNA polymerase beta' chain family. RpoC2 subfamily. In terms of assembly, in cyanobacteria the RNAP catalytic core is composed of 2 alpha, 1 beta, 1 beta', 1 gamma and 1 omega subunit. When a sigma factor is associated with the core the holoenzyme is formed, which can initiate transcription. It depends on Zn(2+) as a cofactor.

The enzyme catalyses RNA(n) + a ribonucleoside 5'-triphosphate = RNA(n+1) + diphosphate. DNA-dependent RNA polymerase catalyzes the transcription of DNA into RNA using the four ribonucleoside triphosphates as substrates. The chain is DNA-directed RNA polymerase subunit beta' from Prochlorococcus marinus (strain AS9601).